The chain runs to 101 residues: NADH-quinone oxidoreductase subunit K (101 aa).

Transmembrane regions (helical) follow at residues 4–24, 30–50, and 61–81; these read LAHYLVLGAILFAISIVGIFL, IIILMAIELMLLAVNTNFVAF, and IFVFFVLTVAAAEAAIGLAIL.

This sequence belongs to the complex I subunit 4L family. In terms of assembly, NDH-1 is composed of 14 different subunits. Subunits NuoA, H, J, K, L, M, N constitute the membrane sector of the complex.

Its subcellular location is the cell inner membrane. The enzyme catalyses a quinone + NADH + 5 H(+)(in) = a quinol + NAD(+) + 4 H(+)(out). Its function is as follows. NDH-1 shuttles electrons from NADH, via FMN and iron-sulfur (Fe-S) centers, to quinones in the respiratory chain. The immediate electron acceptor for the enzyme in this species is believed to be ubiquinone. Couples the redox reaction to proton translocation (for every two electrons transferred, four hydrogen ions are translocated across the cytoplasmic membrane), and thus conserves the redox energy in a proton gradient. This chain is NADH-quinone oxidoreductase subunit K, found in Paraburkholderia phymatum (strain DSM 17167 / CIP 108236 / LMG 21445 / STM815) (Burkholderia phymatum).